A 487-amino-acid polypeptide reads, in one-letter code: Cytochrome P450 2C5 (487 aa).

Cys432 lines the heme pocket.

The protein belongs to the cytochrome P450 family. Heme serves as cofactor.

Its subcellular location is the endoplasmic reticulum membrane. It localises to the microsome membrane. It carries out the reaction an organic molecule + reduced [NADPH--hemoprotein reductase] + O2 = an alcohol + oxidized [NADPH--hemoprotein reductase] + H2O + H(+). In terms of biological role, cytochromes P450 are a group of heme-thiolate monooxygenases. In liver microsomes, this enzyme is involved in an NADPH-dependent electron transport pathway. It oxidizes a variety of structurally unrelated compounds, including steroids, fatty acids, and xenobiotics. This is Cytochrome P450 2C5 (CYP2C5) from Oryctolagus cuniculus (Rabbit).